Here is a 183-residue protein sequence, read N- to C-terminus: MGFSEWNLIWIDLEMTGLDPSRDRIIEIAVVVTDSNLDTLAEGPVLAIHQDRSLLDSMDEWNTRQHGRSGLTERVRASTVTEAEAEAQVLAFLKQYVPARTSPMCGNSICQDRRFLARWMPDLEAYFHYRHIDVSTLKELARRWSPEVAEGVRKSGNHLALDDIRDSIHELRHYRREFLRMPA.

The Exonuclease domain occupies 8 to 171; the sequence is LIWIDLEMTG…DDIRDSIHEL (164 aa). Residue Tyr-129 is part of the active site.

It belongs to the oligoribonuclease family.

The protein resides in the cytoplasm. 3'-to-5' exoribonuclease specific for small oligoribonucleotides. The polypeptide is Oligoribonuclease (Halorhodospira halophila (strain DSM 244 / SL1) (Ectothiorhodospira halophila (strain DSM 244 / SL1))).